Consider the following 472-residue polypeptide: Probable sterol O-acyltransferase 2 (472 aa).

Phosphoserine is present on Ser-12. 3 helical membrane passes run 61–81 (FTGF…MSFL), 111–131 (LAMS…ALGY), and 135–155 (YGLG…HCVL). The N-linked (GlcNAc...) asparagine glycan is linked to Asn-161. A helical transmembrane segment spans residues 170-190 (FILHSMVILMKLHSYNVVNGW). Asn-233 carries an N-linked (GlcNAc...) asparagine glycan. A run of 2 helical transmembrane segments spans residues 262-282 (IHYL…LVII) and 317-337 (TVAF…WVIF). Asn-342 carries an N-linked (GlcNAc...) asparagine glycan. The FYXDWWN motif motif lies at 355–361 (FYDDWWN). Residue His-409 is part of the active site. A helical membrane pass occupies residues 452–472 (IAFWFSIIIGIALIAALYILF).

The protein belongs to the membrane-bound acyltransferase family. Sterol o-acyltransferase subfamily.

It is found in the endoplasmic reticulum membrane. Its function is as follows. Sterol O-acyltransferase that catalyzes the formation of stery esters. This Schizosaccharomyces pombe (strain 972 / ATCC 24843) (Fission yeast) protein is Probable sterol O-acyltransferase 2 (are2).